The primary structure comprises 52 residues: MNIGDVMFQLFVFIIFAAVVFAAVTGFKYAKNRKAQLDRIEKKLNSLSEDHD.

Residues 7 to 27 (MFQLFVFIIFAAVVFAAVTGF) form a helical membrane-spanning segment.

It is found in the membrane. This is an uncharacterized protein from Bacillus subtilis (strain 168).